A 301-amino-acid polypeptide reads, in one-letter code: Lipoyl synthase (301 aa).

[4Fe-4S] cluster contacts are provided by C53, C58, C64, C79, C83, C86, and S290. The 215-residue stretch at 65-279 (WSRKTATYML…RIYGKSIGFK (215 aa)) folds into the Radical SAM core domain.

This sequence belongs to the radical SAM superfamily. Lipoyl synthase family. Requires [4Fe-4S] cluster as cofactor.

It localises to the cytoplasm. It catalyses the reaction [[Fe-S] cluster scaffold protein carrying a second [4Fe-4S](2+) cluster] + N(6)-octanoyl-L-lysyl-[protein] + 2 oxidized [2Fe-2S]-[ferredoxin] + 2 S-adenosyl-L-methionine + 4 H(+) = [[Fe-S] cluster scaffold protein] + N(6)-[(R)-dihydrolipoyl]-L-lysyl-[protein] + 4 Fe(3+) + 2 hydrogen sulfide + 2 5'-deoxyadenosine + 2 L-methionine + 2 reduced [2Fe-2S]-[ferredoxin]. The protein operates within protein modification; protein lipoylation via endogenous pathway; protein N(6)-(lipoyl)lysine from octanoyl-[acyl-carrier-protein]: step 2/2. Catalyzes the radical-mediated insertion of two sulfur atoms into the C-6 and C-8 positions of the octanoyl moiety bound to the lipoyl domains of lipoate-dependent enzymes, thereby converting the octanoylated domains into lipoylated derivatives. This Leptospira interrogans serogroup Icterohaemorrhagiae serovar copenhageni (strain Fiocruz L1-130) protein is Lipoyl synthase.